The sequence spans 269 residues: Tryptophan synthase alpha chain (269 aa).

Active-site proton acceptor residues include Glu-49 and Asp-60.

The protein belongs to the TrpA family. Tetramer of two alpha and two beta chains.

It carries out the reaction (1S,2R)-1-C-(indol-3-yl)glycerol 3-phosphate + L-serine = D-glyceraldehyde 3-phosphate + L-tryptophan + H2O. The protein operates within amino-acid biosynthesis; L-tryptophan biosynthesis; L-tryptophan from chorismate: step 5/5. In terms of biological role, the alpha subunit is responsible for the aldol cleavage of indoleglycerol phosphate to indole and glyceraldehyde 3-phosphate. The protein is Tryptophan synthase alpha chain of Pseudomonas putida (Arthrobacter siderocapsulatus).